We begin with the raw amino-acid sequence, 597 residues long: Histidine protein kinase DivJ (597 aa).

6 helical membrane-spanning segments follow: residues 40-57, 62-81, 91-109, 110-125, 137-158, and 159-188; these read LGWL…LFTA, WPVW…SLIF, WLLV…LTGG, VGGA…VAAA, GAAL…GLAP, and AAPT…LLIG. A Histidine kinase domain is found at 335–553; it reads NMSHELRTPL…TVSVRLPVLL (219 aa). Phosphohistidine; by autocatalysis is present on H338. A compositionally biased stretch (pro residues) spans 561–585; the sequence is PTPPAAPEAPSAPEPAPTVEEPPPA. The disordered stretch occupies residues 561–597; that stretch reads PTPPAAPEAPSAPEPAPTVEEPPPASLGDNVIAFAPR.

The protein resides in the cell membrane. The catalysed reaction is ATP + protein L-histidine = ADP + protein N-phospho-L-histidine.. Functionally, kinase required for the regulation of cell division and differentiation. Is part of a signal transduction pathway, activating PleD by phosphorylation. This Caulobacter vibrioides (strain ATCC 19089 / CIP 103742 / CB 15) (Caulobacter crescentus) protein is Histidine protein kinase DivJ (divJ).